A 27-amino-acid chain; its full sequence is Alpha-benincasin (27 aa).

Its function is as follows. Has weak antifungal activity toward C.comatus and P.piricola but not toward M.arachidicola. Inhibits cell-free translation in rabbit reticulocyte lysate system. The chain is Alpha-benincasin from Benincasa hispida (Wax gourd).